The sequence spans 227 residues: Large ribosomal subunit protein bL25 (227 aa).

Positions 1-22 are disordered; sequence MAETKTLAAAARHGTGKGAARS.

The protein belongs to the bacterial ribosomal protein bL25 family. CTC subfamily. As to quaternary structure, part of the 50S ribosomal subunit; part of the 5S rRNA/L5/L18/L25 subcomplex. Contacts the 5S rRNA. Binds to the 5S rRNA independently of L5 and L18.

Functionally, this is one of the proteins that binds to the 5S RNA in the ribosome where it forms part of the central protuberance. In Methylocella silvestris (strain DSM 15510 / CIP 108128 / LMG 27833 / NCIMB 13906 / BL2), this protein is Large ribosomal subunit protein bL25.